The sequence spans 433 residues: Homogentisate 1,2-dioxygenase (433 aa).

The active-site Proton acceptor is H288. H331 and E337 together coordinate Fe cation. 2 residues coordinate homogentisate: Y346 and H367. H367 is a binding site for Fe cation.

The protein belongs to the homogentisate dioxygenase family. Hexamer; dimer of trimers. It depends on Fe cation as a cofactor.

It catalyses the reaction homogentisate + O2 = 4-maleylacetoacetate + H(+). It participates in amino-acid degradation; L-phenylalanine degradation; acetoacetate and fumarate from L-phenylalanine: step 4/6. Its function is as follows. Involved in the catabolism of homogentisate (2,5-dihydroxyphenylacetate or 2,5-OH-PhAc), a central intermediate in the degradation of phenylalanine and tyrosine. Catalyzes the oxidative ring cleavage of the aromatic ring of homogentisate to yield maleylacetoacetate. The protein is Homogentisate 1,2-dioxygenase of Pseudomonas putida (strain ATCC 700007 / DSM 6899 / JCM 31910 / BCRC 17059 / LMG 24140 / F1).